Reading from the N-terminus, the 119-residue chain is Large ribosomal subunit protein bL20 (119 aa).

It belongs to the bacterial ribosomal protein bL20 family.

Its function is as follows. Binds directly to 23S ribosomal RNA and is necessary for the in vitro assembly process of the 50S ribosomal subunit. It is not involved in the protein synthesizing functions of that subunit. In Metamycoplasma arthritidis (strain 158L3-1) (Mycoplasma arthritidis), this protein is Large ribosomal subunit protein bL20.